The primary structure comprises 340 residues: Glycerol-3-phosphate dehydrogenase [NAD(P)+] (340 aa).

Ser13, Trp14, and Lys108 together coordinate NADPH. The sn-glycerol 3-phosphate site is built by Lys108, Gly139, and Ser141. Position 143 (Ala143) interacts with NADPH. Sn-glycerol 3-phosphate is bound by residues Lys194, Asp247, Ser257, Arg258, and Asn259. Lys194 serves as the catalytic Proton acceptor. Arg258 is a binding site for NADPH. Positions 282 and 284 each coordinate NADPH.

The protein belongs to the NAD-dependent glycerol-3-phosphate dehydrogenase family.

The protein resides in the cytoplasm. The enzyme catalyses sn-glycerol 3-phosphate + NAD(+) = dihydroxyacetone phosphate + NADH + H(+). It catalyses the reaction sn-glycerol 3-phosphate + NADP(+) = dihydroxyacetone phosphate + NADPH + H(+). Its pathway is membrane lipid metabolism; glycerophospholipid metabolism. In terms of biological role, catalyzes the reduction of the glycolytic intermediate dihydroxyacetone phosphate (DHAP) to sn-glycerol 3-phosphate (G3P), the key precursor for phospholipid synthesis. This is Glycerol-3-phosphate dehydrogenase [NAD(P)+] from Streptococcus thermophilus (strain CNRZ 1066).